Consider the following 815-residue polypeptide: Protein-glutamine gamma-glutamyltransferase K (815 aa).

Disordered regions lie at residues 1-40 (MDGPRSDVGRWGGNPWQPPTTPSPEPEPEPEPERRSRRGG) and 59-100 (DDWG…AAGD). The span at 16 to 25 (WQPPTTPSPE) shows a compositional bias: pro residues. T21 is subject to Phosphothreonine. 5 positions are modified to phosphoserine: S23, S80, S83, S90, and S93. A compositionally biased stretch (basic and acidic residues) spans 59–87 (DDWGPEPHRDRGSGSGRRRPDSRGSDSRR). Residues C375, H434, and D457 contribute to the active site. N497, D499, E546, and E551 together coordinate Ca(2+). The disordered stretch occupies residues 795–815 (SNAGGNSPLGETIPMASRGGA).

It belongs to the transglutaminase superfamily. Transglutaminase family. Interacts with PLAAT4. It depends on Ca(2+) as a cofactor. Post-translationally, palmitoylated. In terms of processing, the membrane anchorage region possesses a cluster of five cysteines within which fatty acid(s) may become thioester-linked. It is subject to phorbol ester-stimulated phosphorylation and is hypersensitive to proteolysis, which releases the enzyme in a soluble form. Tyrosine-phosphorylated.

Its subcellular location is the membrane. The catalysed reaction is L-glutaminyl-[protein] + L-lysyl-[protein] = [protein]-L-lysyl-N(6)-5-L-glutamyl-[protein] + NH4(+). In terms of biological role, catalyzes the cross-linking of proteins and the conjugation of polyamines to proteins. Responsible for cross-linking epidermal proteins during formation of the stratum corneum. Involved in cell proliferation. This is Protein-glutamine gamma-glutamyltransferase K (TGM1) from Canis lupus familiaris (Dog).